A 490-amino-acid polypeptide reads, in one-letter code: Katanin p60 ATPase-containing subunit A-like 1 (490 aa).

M1 carries the post-translational modification N-acetylmethionine. A disordered region spans residues 95–184; that stretch reads DPAVWPPPVP…DGEMPKFDGA (90 aa). Basic and acidic residues predominate over residues 116–127; sequence PNREVRPLRKEM. Positions 128–139 are enriched in low complexity; the sequence is AGVGARGPVGRA. Residues 143-169 are compositionally biased toward basic and acidic residues; that stretch reads SKSEKPSTSRDKDCRARGRDDKGRKNM. S174 carries the phosphoserine modification. ATP is bound at residue 248–255; it reads GPPGTGKT.

This sequence belongs to the AAA ATPase family. Katanin p60 subunit A1 subfamily. A-like 1 sub-subfamily. As to quaternary structure, interacts with KATNB1 and KATNBL1.

It is found in the cytoplasm. Its subcellular location is the cytoskeleton. It localises to the spindle pole. The protein localises to the spindle. The catalysed reaction is n ATP + n H2O + a microtubule = n ADP + n phosphate + (n+1) alpha/beta tubulin heterodimers.. In terms of biological role, regulates microtubule dynamics in Sertoli cells, a process that is essential for spermiogenesis and male fertility. Severs microtubules in an ATP-dependent manner, promoting rapid reorganization of cellular microtubule arrays. Has microtubule-severing activity in vitro. The chain is Katanin p60 ATPase-containing subunit A-like 1 from Papio anubis (Olive baboon).